The sequence spans 327 residues: Phenylalanine--tRNA ligase alpha subunit (327 aa).

Glutamate 253 lines the Mg(2+) pocket.

The protein belongs to the class-II aminoacyl-tRNA synthetase family. Phe-tRNA synthetase alpha subunit type 1 subfamily. Tetramer of two alpha and two beta subunits. Requires Mg(2+) as cofactor.

Its subcellular location is the cytoplasm. It carries out the reaction tRNA(Phe) + L-phenylalanine + ATP = L-phenylalanyl-tRNA(Phe) + AMP + diphosphate + H(+). The polypeptide is Phenylalanine--tRNA ligase alpha subunit (Laribacter hongkongensis (strain HLHK9)).